We begin with the raw amino-acid sequence, 79 residues long: Raniseptin-3 (79 aa).

Residues 1-22 form the signal peptide; that stretch reads MAFLKKSLFLVLFLGIVSLSIC. The propeptide occupies 23 to 49; sequence EEEKREGEEEEKQEEENEELSEEELRE.

It belongs to the frog skin active peptide (FSAP) family. Dermaseptin subfamily. As to expression, expressed by the skin glands.

It is found in the secreted. Its function is as follows. Has antibacterial activity. This chain is Raniseptin-3, found in Boana raniceps (Chaco tree frog).